A 365-amino-acid polypeptide reads, in one-letter code: Chorismate synthase (365 aa).

R48 and R54 together coordinate NADP(+). FMN contacts are provided by residues 131 to 133 (RSS), 243 to 244 (NA), G288, 303 to 307 (KPTSS), and R329.

This sequence belongs to the chorismate synthase family. As to quaternary structure, homotetramer. FMNH2 serves as cofactor.

It catalyses the reaction 5-O-(1-carboxyvinyl)-3-phosphoshikimate = chorismate + phosphate. It functions in the pathway metabolic intermediate biosynthesis; chorismate biosynthesis; chorismate from D-erythrose 4-phosphate and phosphoenolpyruvate: step 7/7. Catalyzes the anti-1,4-elimination of the C-3 phosphate and the C-6 proR hydrogen from 5-enolpyruvylshikimate-3-phosphate (EPSP) to yield chorismate, which is the branch point compound that serves as the starting substrate for the three terminal pathways of aromatic amino acid biosynthesis. This reaction introduces a second double bond into the aromatic ring system. The protein is Chorismate synthase of Agrobacterium fabrum (strain C58 / ATCC 33970) (Agrobacterium tumefaciens (strain C58)).